The chain runs to 139 residues: Translation initiation factor 2 subunit beta (139 aa).

This sequence belongs to the eIF-2-beta/eIF-5 family. As to quaternary structure, heterotrimer composed of an alpha, a beta and a gamma chain.

Functionally, eIF-2 functions in the early steps of protein synthesis by forming a ternary complex with GTP and initiator tRNA. The chain is Translation initiation factor 2 subunit beta from Saccharolobus islandicus (strain Y.N.15.51 / Yellowstone #2) (Sulfolobus islandicus).